A 95-amino-acid polypeptide reads, in one-letter code: MQGVLVGLGAGLGAISRYQLSMLIDAPLALLGINLLGSFLMGWLRPNLLWGTGFLGGFTSFSAFALLMFDGAYLYAAVTVIGCVAAWLLGDRFAA.

3 helical membrane passes run 23–43, 49–69, and 70–90; these read LIDA…LMGW, LWGT…LLMF, and DGAY…WLLG. Residues glycine 56 and threonine 59 each contribute to the Na(+) site.

The protein belongs to the fluoride channel Fluc/FEX (TC 1.A.43) family.

It is found in the cell membrane. It carries out the reaction fluoride(in) = fluoride(out). Its activity is regulated as follows. Na(+) is not transported, but it plays an essential structural role and its presence is essential for fluoride channel function. Its function is as follows. Fluoride-specific ion channel. Important for reducing fluoride concentration in the cell, thus reducing its toxicity. The chain is Fluoride-specific ion channel FluC 1 from Corynebacterium diphtheriae (strain ATCC 700971 / NCTC 13129 / Biotype gravis).